The primary structure comprises 708 residues: Double-strand break repair protein MRE11 (708 aa).

S2 carries the post-translational modification N-acetylserine. At S2 the chain carries Phosphoserine. Mn(2+) is bound by residues D20, H22, and D60. Positions 87 to 117 are interaction with NBN; it reads RPVQFEILSDQSVNFGFSKFPWVNYQDGNLN. Position 128 (N128) interacts with Mn(2+). Residue H129 is the Proton donor of the active site. Positions 217, 245, and 247 each coordinate Mn(2+). A Glycyl lysine isopeptide (Lys-Gly) (interchain with G-Cter in SUMO2) cross-link involves residue K255. The residue at position 275 (S275) is a Phosphoserine. A Glycyl lysine isopeptide (Lys-Gly) (interchain with G-Cter in UFM1) cross-link involves residue K282. K339 participates in a covalent cross-link: Glycyl lysine isopeptide (Lys-Gly) (interchain with G-Cter in ubiquitin). K384 is covalently cross-linked (Glycyl lysine isopeptide (Lys-Gly) (interchain with G-Cter in SUMO)). K416 is covalently cross-linked (Glycyl lysine isopeptide (Lys-Gly) (interchain with G-Cter in SUMO2)). A Glycyl lysine isopeptide (Lys-Gly) (interchain with G-Cter in SUMO) cross-link involves residue K467. K480 participates in a covalent cross-link: Glycyl lysine isopeptide (Lys-Gly) (interchain with G-Cter in ubiquitin). Disordered stretches follow at residues 507–540 and 556–614; these read TRQK…ASAF and NDSD…AVSA. Basic residues predominate over residues 569–579; sequence GRGRGRGRRGG. Asymmetric dimethylarginine is present on residues R570, R572, R574, R576, R577, R580, R587, R592, and R594. Residues 570–594 carry the GAR motif; sequence RGRGRGRRGGRGQNSASRGGSQRGR. The segment covering 599–614 has biased composition (polar residues); that stretch reads LETSTRSRNSKTAVSA. S619 carries the phosphoserine modification. Residue K625 forms a Glycyl lysine isopeptide (Lys-Gly) (interchain with G-Cter in SUMO2) linkage. S641 is modified (phosphoserine). Residue S649 is modified to Phosphoserine; by PLK1. Residues 651 to 708 are disordered; sequence VEEDIFPTTSKTDQRWSSTSSSKIMSQSQVSKGVDFESSEDDDDDPFMNTSSLRRNRR. Over residues 667-681 the composition is skewed to low complexity; the sequence is SSTSSSKIMSQSQVS. Position 673 is an N6-lactoyllysine (K673). 2 positions are modified to phosphoserine; by ATM: S676 and S678. The segment covering 687-696 has biased composition (acidic residues); that stretch reads ESSEDDDDDP. At S688 the chain carries Phosphoserine; by CDK2. Phosphoserine is present on residues S689 and S701. Over residues 698–708 the composition is skewed to polar residues; it reads MNTSSLRRNRR.

It belongs to the MRE11/RAD32 family. As to quaternary structure, component of the MRN complex composed of two heterodimers RAD50 and MRE11 associated with a single NBN. The MRN complexes dimerize on DNA to form joined MRN-MRN oligomers required for DNA double-strand break repair. As part of the MRN complex, interacts with MCM9; the interaction recruits the complex to DNA repair sites. Component of the BASC complex, at least composed of BRCA1, MSH2, MSH6, MLH1, ATM, BLM, RAD50, MRE11 and NBN. Found in a complex with TERF2. Interacts with DCLRE1C/Artemis and DCLRE1B/Apollo. Interacts with ATF2. Interacts with EXD2. Interacts with MRNIP. Interacts with SAMHD1; leading to stimulate 3'-5' exonuclease activity. Interacts (when ubiquitinated) with UBQLN4 (via its UBA domain). Interacts with CYREN (via XLF motif). Interacts with GFI1; promoting methylation by PRMT1. Interacts with DYNLL1; inhibiting the activity of MRE11. Interacts with C1QBP and RAD50; interaction takes place in absence of DNA damage to form the MRC (MRE11-RAD50-C1QBP) complex that inhibits the activity of MRE11. Interacts with AGER/RAGE. AGER is recruited to DNA double-strand break sites where it enhances MRE11 endonuclease activity to promote DNA repair. (Microbial infection) Interacts with herpes simplex virus 1 protein UL12. Mn(2+) serves as cofactor. Post-translationally, phosphorylated by ATM at Ser-676 and Ser-678 in response to DNA damage, promoting MRE11 activity: phosphorylation activates MRE11 by preventing the interaction between MRE11 and the C1QBP inhibitor. Phosphorylation at Ser-649 by PLK1 primes for phosphorylation at Ser-688 by CK2, inhibiting recruitment of the MRN complex to DNA damage sites. Asymmetric dimethylation by PRMT1 promotes MRE11 exonuclease activity. In terms of processing, lactylation at Lys-673 by CREBBP/CBP in response to DNA damage promotes DNA binding and MRE11 activity. Post-translationally, acetylated on lysine residues by KAT2A /GCN5. Ubiquitinated following DNA damage. Ubiquitination triggers interaction with UBQLN4, leading to MRE11 removal from chromatin and degradation by the proteasome. Ubiquitinated at Lys-339 and Lys-480 by RNF126 via 'Lys-27'- and 'Lys-29'-linked polyubiquitin chains, promoting the exonuclease activity of MRE11. In terms of processing, SUMOylated by PIAS1, stabilizing MRE11 on chromatin during end resection. DeSUMOylated by SENP3 following removal from DNA double-strand breaks (DSBs). Post-translationally, ufmylation at Lys-282 promotes MRE11 activity and is required for activation of the ATM and ATR kinases by the MRN complex. (Microbial infection) Following infection by adenovirus E4, ubiquitinated and degraded by a SCF-like E3 ubiquitin ligase complex containing viral proteins E1B-55K and E4-ORF6.

It is found in the nucleus. It localises to the chromosome. The protein localises to the telomere. Its activity is regulated as follows. Interaction with SAMHD1 stimulates the double-strand-specific 3'-5' exonuclease activity. RBBP8/CtIP specifically promotes the endonuclease activity to clear protein-DNA adducts and generate clean double-strand break ends. DYNLL1-binding inhibits the activity of MRE11. MRE11 activity is inhibited by C1QBP: in absence of DNA damage, C1QBP interacts with unphosphorylated MRE11, preventing formation and activity of the MRN complex. The mirin-derivative PFM39, specifically inhibits the 3'-5' exonuclease activity. The N-alkylated mirin-derivatives PFM03 and PFM01 specifically inhibit the endonuclease activity. Its function is as follows. Core component of the MRN complex, which plays a central role in double-strand break (DSB) repair, DNA recombination, maintenance of telomere integrity and meiosis. The MRN complex is involved in the repair of DNA double-strand breaks (DSBs) via homologous recombination (HR), an error-free mechanism which primarily occurs during S and G2 phases. The complex (1) mediates the end resection of damaged DNA, which generates proper single-stranded DNA, a key initial steps in HR, and is (2) required for the recruitment of other repair factors and efficient activation of ATM and ATR upon DNA damage. Within the MRN complex, MRE11 possesses both single-strand endonuclease activity and double-strand-specific 3'-5' exonuclease activity. After DSBs, MRE11 is loaded onto DSBs sites and cleaves DNA by cooperating with RBBP8/CtIP to initiate end resection. MRE11 first endonucleolytically cleaves the 5' strand at DNA DSB ends to prevent non-homologous end joining (NHEJ) and licence HR. It then generates a single-stranded DNA gap via 3' to 5' exonucleolytic degradation to create entry sites for EXO1- and DNA2-mediated 5' to 3' long-range resection, which is required for single-strand invasion and recombination. RBBP8/CtIP specifically promotes the endonuclease activity of MRE11 to clear protein-DNA adducts and generate clean double-strand break ends. MRE11 endonuclease activity is also enhanced by AGER/RAGE. The MRN complex is also required for DNA damage signaling via activation of the ATM and ATR kinases: the nuclease activity of MRE11 is not required to activate ATM and ATR. The MRN complex is also required for the processing of R-loops. The MRN complex is involved in the activation of the cGAS-STING pathway induced by DNA damage during tumorigenesis: the MRN complex acts by displacing CGAS from nucleosome sequestration, thereby activating it. In telomeres the MRN complex may modulate t-loop formation. Functionally, MRE11 contains two DNA-binding domains (DBDs), enabling it to bind both single-stranded DNA (ssDNA) and double-stranded DNA (dsDNA). The polypeptide is Double-strand break repair protein MRE11 (Homo sapiens (Human)).